A 156-amino-acid chain; its full sequence is Putative pre-16S rRNA nuclease (156 aa).

This sequence belongs to the YqgF nuclease family.

It is found in the cytoplasm. In terms of biological role, could be a nuclease involved in processing of the 5'-end of pre-16S rRNA. The sequence is that of Putative pre-16S rRNA nuclease from Caulobacter vibrioides (strain ATCC 19089 / CIP 103742 / CB 15) (Caulobacter crescentus).